The primary structure comprises 191 residues: Transcription factor E (191 aa).

One can recognise an HTH TFE/IIEalpha-type domain in the interval 4 to 87 (RNKELLEIGR…YWHIETKRLP (84 aa)). The segment at 170-191 (APPKKEKKGKKSKKRSKKSKKK) is disordered. Positions 174 to 191 (KEKKGKKSKKRSKKSKKK) are enriched in basic residues.

It belongs to the TFE family. Monomer. Interaction with RNA polymerase subunits RpoF and RpoE is necessary for Tfe stimulatory transcription activity. Able to interact with Tbp and RNA polymerase in the absence of DNA promoter. Interacts both with the preinitiation and elongation complexes.

Functionally, transcription factor that plays a role in the activation of archaeal genes transcribed by RNA polymerase. Facilitates transcription initiation by enhancing TATA-box recognition by TATA-box-binding protein (Tbp), and transcription factor B (Tfb) and RNA polymerase recruitment. Not absolutely required for transcription in vitro, but particularly important in cases where Tbp or Tfb function is not optimal. It dynamically alters the nucleic acid-binding properties of RNA polymerases by stabilizing the initiation complex and destabilizing elongation complexes. Seems to translocate with the RNA polymerase following initiation and acts by binding to the non template strand of the transcription bubble in elongation complexes. The sequence is that of Transcription factor E from Pyrococcus horikoshii (strain ATCC 700860 / DSM 12428 / JCM 9974 / NBRC 100139 / OT-3).